The sequence spans 398 residues: Bifunctional enzyme IspD/IspF (398 aa).

The 2-C-methyl-D-erythritol 4-phosphate cytidylyltransferase stretch occupies residues 1–234 (MTNSPRTAAI…SRLMAALGDI (234 aa)). The interval 235 to 398 (RTGTGYDVHA…LPWGADGLAG (164 aa)) is 2-C-methyl-D-erythritol 2,4-cyclodiphosphate synthase. A divalent metal cation is bound by residues aspartate 241 and histidine 243. Residues 241 to 243 (DVH) and 267 to 268 (HS) each bind 4-CDP-2-C-methyl-D-erythritol 2-phosphate. Histidine 275 serves as a coordination point for a divalent metal cation. 4-CDP-2-C-methyl-D-erythritol 2-phosphate is bound by residues 289 to 291 (DIG), 365 to 368 (TTSE), phenylalanine 372, and arginine 375.

The protein in the N-terminal section; belongs to the IspD/TarI cytidylyltransferase family. IspD subfamily. This sequence in the C-terminal section; belongs to the IspF family. A divalent metal cation serves as cofactor.

The enzyme catalyses 2-C-methyl-D-erythritol 4-phosphate + CTP + H(+) = 4-CDP-2-C-methyl-D-erythritol + diphosphate. It carries out the reaction 4-CDP-2-C-methyl-D-erythritol 2-phosphate = 2-C-methyl-D-erythritol 2,4-cyclic diphosphate + CMP. The protein operates within isoprenoid biosynthesis; isopentenyl diphosphate biosynthesis via DXP pathway; isopentenyl diphosphate from 1-deoxy-D-xylulose 5-phosphate: step 2/6. Its pathway is isoprenoid biosynthesis; isopentenyl diphosphate biosynthesis via DXP pathway; isopentenyl diphosphate from 1-deoxy-D-xylulose 5-phosphate: step 4/6. Its function is as follows. Bifunctional enzyme that catalyzes the formation of 4-diphosphocytidyl-2-C-methyl-D-erythritol from CTP and 2-C-methyl-D-erythritol 4-phosphate (MEP) (IspD), and catalyzes the conversion of 4-diphosphocytidyl-2-C-methyl-D-erythritol 2-phosphate (CDP-ME2P) to 2-C-methyl-D-erythritol 2,4-cyclodiphosphate (ME-CPP) with a corresponding release of cytidine 5-monophosphate (CMP) (IspF). This Rhodopseudomonas palustris (strain ATCC BAA-98 / CGA009) protein is Bifunctional enzyme IspD/IspF.